The following is a 95-amino-acid chain: Co-chaperonin GroES (95 aa).

It belongs to the GroES chaperonin family. As to quaternary structure, heptamer of 7 subunits arranged in a ring. Interacts with the chaperonin GroEL.

The protein resides in the cytoplasm. Together with the chaperonin GroEL, plays an essential role in assisting protein folding. The GroEL-GroES system forms a nano-cage that allows encapsulation of the non-native substrate proteins and provides a physical environment optimized to promote and accelerate protein folding. GroES binds to the apical surface of the GroEL ring, thereby capping the opening of the GroEL channel. In Pelobacter propionicus (strain DSM 2379 / NBRC 103807 / OttBd1), this protein is Co-chaperonin GroES.